The primary structure comprises 296 residues: tRNA dimethylallyltransferase (296 aa).

11–18 (GPTAVGKT) contacts ATP. 13–18 (TAVGKT) lines the substrate pocket. An interaction with substrate tRNA region spans residues 36 to 39 (DSQQ).

It belongs to the IPP transferase family. As to quaternary structure, monomer. Mg(2+) serves as cofactor.

The enzyme catalyses adenosine(37) in tRNA + dimethylallyl diphosphate = N(6)-dimethylallyladenosine(37) in tRNA + diphosphate. Functionally, catalyzes the transfer of a dimethylallyl group onto the adenine at position 37 in tRNAs that read codons beginning with uridine, leading to the formation of N6-(dimethylallyl)adenosine (i(6)A). This is tRNA dimethylallyltransferase from Streptococcus equi subsp. zooepidemicus (strain H70).